The chain runs to 854 residues: MLSSNDQKLEKLDSFYRPPVSKQRTSAEIISEARNALRTVRTQRPFTPREDQRKLFGPASSRSPENRPPSSFSLHASSFELSDSKPISGTRLRPLELKPKAPASPGTEDACLSFPKAPLDPAKIRKISGARARFYRAASQGMLLPDRSPPAAHSKTVDESSKPVSVGSSTARRNGTHLTASSATGQLKSPPLLTCDQGFQETTEQEVSLLSQLRRGGDPGKRRARASSCPSSSDLSRKETRAASRASSQEQETDTEVDEVFWKARIVPILHELENEEDIEEMCAACTQLHRTLEEARMLGKKFKRRTVLLKALYKLVDADSDPLSLKLAKLILALKVSGKNLLNVCKLIFKISRNEKNDTLMQEDNILESLLEVLRAEELQSNTEAFLYCMGALKFVSGSPGFLTEMVNKGAVEILAQLIKEMTEDTEKHGVCLPDSGHLLVQTTATLRNLVDSPLTRSKLLNMGAFPHLCTVMEQHADDKDICTNIARIFSKLTSYRDCCAALASYSRCYALFLSLLNKYQKNQDLVIRIVFILGNLTAKSNQARELFSRETGSVETLLTLFQSFYHHKENSPKLQLSEAKPQAEAEDVLVKLTRVLANIAIHPRIGPVLAANPRVVGLLLRTLESKSLGDCEELVINTIAAINNLSFYQVKSSVLQHRKLYVAELLLRLLVSNNMERILEAVRVFGNLSQDHDVCNFLMQKNVHKFMITLLEAKHQDICFSACGVLLNLTVDKEKRAILKEGGGIKKLVDCLRDFGPSDWQLACLVCKTLWNFSENITNASECFGDDVANTLLILLSTFLDEELALNGSFDQDLESYHRLHWETEFKPVAQQLLQRIQSHHSLLEPLPVPSF.

Disordered regions lie at residues 1-116 (MLSS…SFPK), 140-194 (QGML…PLLT), and 206-255 (EVSL…ETDT). Residues 58 to 73 (PASSRSPENRPPSSFS) show a composition bias toward low complexity. Polar residues-rich tracts occupy residues 74–87 (LHAS…SKPI) and 162–187 (KPVS…TGQL). 12 ARM repeats span residues 255–294 (TEVD…RTLE), 298–337 (MLGK…ALKV), 356–396 (EKND…ALKF), 401–442 (PGFL…HLLV), 455–496 (PLTR…KLTS), 499–540 (DCCA…NLTA), 544–583 (QARE…EAKP), 585–605 (AEAE…AIHP), 606–649 (RIGP…NLSF), 651–692 (QVKS…NLSQ), 694–733 (HDVC…NLTV), and 735–777 (KEKR…NFSE).

Functionally, required for sperm flagellum axoneme organization and function. Involved in axonemal central pair complex assembly and/or stability. This is Armadillo repeat-containing protein 2 from Mus musculus (Mouse).